Here is a 633-residue protein sequence, read N- to C-terminus: Histone-lysine N-methyltransferase Su(var)3-9 (633 aa).

The Chromo domain maps to 213–271; that stretch reads YIVEKIESVEVVQFQPVFFVKWLGYDVSANTWESYVNLSDCAEMEKFVERHLQLHQHYI. The 66-residue stretch at 407-472 folds into the Pre-SET domain; that stretch reads VGCMCRHQSG…SCTNRVVQNG (66 aa). 9 residues coordinate Zn(2+): Cys409, Cys411, Cys419, Cys425, Cys426, Cys454, Cys458, Cys460, and Cys464. In terms of domain architecture, SET spans 475–601; the sequence is HPLVLFKTSN…AGEELSFDYI (127 aa). S-adenosyl-L-methionine is bound by residues 486 to 488, Tyr529, and 558 to 559; these read SGW and NH. The Zn(2+) site is built by Cys561, Cys621, Cys623, and Cys628. Residues 617-633 enclose the Post-SET domain; sequence ARVQCRCGAANCRKVLF.

This sequence belongs to the class V-like SAM-binding methyltransferase superfamily. Histone-lysine methyltransferase family. Suvar3-9 subfamily. As to quaternary structure, interacts with Su(var)205 and Su(var)3-7. Probably associates with HDAC1/Rpd3.

The protein localises to the nucleus. It localises to the chromosome. It is found in the centromere. It carries out the reaction L-lysyl(9)-[histone H3] + 3 S-adenosyl-L-methionine = N(6),N(6),N(6)-trimethyl-L-lysyl(9)-[histone H3] + 3 S-adenosyl-L-homocysteine + 3 H(+). Functionally, histone methyltransferase that specifically trimethylates 'Lys-9' of histone H3 using monomethylated H3 'Lys-9' as substrate. H3 'Lys-9' trimethylation represents a specific tag for epigenetic transcriptional repression by recruiting Su(var)205/HP1 to methylated histones. Mainly functions in heterochromatin regions, thereby playing a central role in the establishment of constitutive heterochromatin at pericentric regions. Involved in heterochromatic gene silencing including the modification of position-effect-variegation. The sequence is that of Histone-lysine N-methyltransferase Su(var)3-9 (Su(var)3-9) from Drosophila pseudoobscura pseudoobscura (Fruit fly).